Here is a 596-residue protein sequence, read N- to C-terminus: Pentatricopeptide repeat-containing protein At1g50270 (596 aa).

PPR repeat units lie at residues S66 to P102, S103 to S136, D137 to K167, D168 to A202, N203 to K237, D239 to R269, N270 to P304, N305 to I339, N340 to K370, N371 to P405, N406 to R436, and K442 to E472. The segment at V477–K552 is type E motif. The segment at G553–R584 is type E(+) motif.

This sequence belongs to the PPR family. PCMP-E subfamily.

This is Pentatricopeptide repeat-containing protein At1g50270 (PCMP-E42) from Arabidopsis thaliana (Mouse-ear cress).